We begin with the raw amino-acid sequence, 303 residues long: tRNA pseudouridine synthase B (303 aa).

D47 acts as the Nucleophile in catalysis.

It belongs to the pseudouridine synthase TruB family. Type 1 subfamily.

It catalyses the reaction uridine(55) in tRNA = pseudouridine(55) in tRNA. Its function is as follows. Responsible for synthesis of pseudouridine from uracil-55 in the psi GC loop of transfer RNAs. This is tRNA pseudouridine synthase B from Ruegeria pomeroyi (strain ATCC 700808 / DSM 15171 / DSS-3) (Silicibacter pomeroyi).